The chain runs to 180 residues: Superoxide dismutase [Cu-Zn] (180 aa).

The first 19 residues, 1-19 (MFMNLLTQVSNAIFPQVEA), serve as a signal peptide directing secretion. Residues His68, His70, and His85 each coordinate Cu cation. Cys79 and Cys171 are disulfide-bonded. Positions 85, 93, 102, and 105 each coordinate Zn(2+). His142 serves as a coordination point for Cu cation.

It belongs to the Cu-Zn superoxide dismutase family. In terms of assembly, homodimer. Cu cation serves as cofactor. Zn(2+) is required as a cofactor.

The protein localises to the cytoplasm. The enzyme catalyses 2 superoxide + 2 H(+) = H2O2 + O2. With respect to regulation, the insertion of copper which activates the protein requires glutathione. This is independent of copper chaperone for SOD1 (CCS), which activates orthologs. In terms of biological role, protects cells against oxidative stress by converting superoxide radicals to hydrogen peroxide. Required for normal brood size. May be involved in regulating mpk-1 phosphorylation downstream of phosphatase ptp-2 during oocyte maturation. In Caenorhabditis elegans, this protein is Superoxide dismutase [Cu-Zn] (sod-1).